The following is a 283-amino-acid chain: BTB/POZ domain-containing protein KCTD15 (283 aa).

Residues M1–T33 form a disordered region. S31, S35, and S38 each carry phosphoserine. Residues A56–D126 form the BTB domain.

In terms of assembly, forms oligomers, predominantly homopentamers. Interacts with KCTD1, probably forming heteropentamers depending on its abundance in a cell-type dependent manner. Interacts with TFAP2A; this interaction inhibits TFAP2A transcriptional activation.

It is found in the nucleus. Functionally, during embryonic development, interferes with neural crest formation. Inhibits AP2 transcriptional activity by interaction with its activation domain. This is BTB/POZ domain-containing protein KCTD15 (KCTD15) from Bos taurus (Bovine).